The following is a 292-amino-acid chain: 4-hydroxy-tetrahydrodipicolinate synthase (292 aa).

Pyruvate is bound at residue Thr-46. Catalysis depends on Tyr-134, which acts as the Proton donor/acceptor. Catalysis depends on Lys-162, which acts as the Schiff-base intermediate with substrate. Ile-204 is a pyruvate binding site.

This sequence belongs to the DapA family. As to quaternary structure, homotetramer; dimer of dimers.

It localises to the cytoplasm. It catalyses the reaction L-aspartate 4-semialdehyde + pyruvate = (2S,4S)-4-hydroxy-2,3,4,5-tetrahydrodipicolinate + H2O + H(+). It functions in the pathway amino-acid biosynthesis; L-lysine biosynthesis via DAP pathway; (S)-tetrahydrodipicolinate from L-aspartate: step 3/4. Catalyzes the condensation of (S)-aspartate-beta-semialdehyde [(S)-ASA] and pyruvate to 4-hydroxy-tetrahydrodipicolinate (HTPA). The chain is 4-hydroxy-tetrahydrodipicolinate synthase from Moorella thermoacetica (strain ATCC 39073 / JCM 9320).